Reading from the N-terminus, the 334-residue chain is Fructose-1,6-bisphosphatase class 1 2 (334 aa).

Mg(2+)-binding residues include Glu-92, Asp-114, Leu-116, and Asp-117. Substrate contacts are provided by residues 117–120 (DGSS), Asn-208, and Lys-274. Glu-280 is a binding site for Mg(2+).

Belongs to the FBPase class 1 family. As to quaternary structure, homotetramer. Requires Mg(2+) as cofactor.

It localises to the cytoplasm. The catalysed reaction is beta-D-fructose 1,6-bisphosphate + H2O = beta-D-fructose 6-phosphate + phosphate. It participates in carbohydrate biosynthesis; gluconeogenesis. The sequence is that of Fructose-1,6-bisphosphatase class 1 2 from Albidiferax ferrireducens (strain ATCC BAA-621 / DSM 15236 / T118) (Rhodoferax ferrireducens).